A 944-amino-acid polypeptide reads, in one-letter code: Protein translocase subunit SecA (944 aa).

ATP contacts are provided by residues Gln96, 114-118, and Asp554; that span reads GEGKT.

It belongs to the SecA family. As to quaternary structure, monomer and homodimer. Part of the essential Sec protein translocation apparatus which comprises SecA, SecYEG and auxiliary proteins SecDF. Other proteins may also be involved.

It is found in the cell inner membrane. Its subcellular location is the cytoplasm. It catalyses the reaction ATP + H2O + cellular proteinSide 1 = ADP + phosphate + cellular proteinSide 2.. In terms of biological role, part of the Sec protein translocase complex. Interacts with the SecYEG preprotein conducting channel. Has a central role in coupling the hydrolysis of ATP to the transfer of proteins into and across the cell membrane, serving as an ATP-driven molecular motor driving the stepwise translocation of polypeptide chains across the membrane. This chain is Protein translocase subunit SecA, found in Hydrogenobaculum sp. (strain Y04AAS1).